The sequence spans 189 residues: PTS system glucose-specific EIIA component (189 aa).

Residues 31 to 135 enclose the PTS EIIA type-1 domain; sequence DEAFAEKIVG…SVITPVVIAN (105 aa). 2 residues coordinate Zn(2+): His-68 and His-83. Catalysis depends on His-83, which acts as the Tele-phosphohistidine intermediate; for EIIA activity. His-83 is subject to Phosphohistidine; by HPr.

As to quaternary structure, heterodimer with glycerol kinase (glpk). Zn(2+) is required as a cofactor.

It localises to the cytoplasm. Its function is as follows. The phosphoenolpyruvate-dependent sugar phosphotransferase system (sugar PTS), a major carbohydrate active transport system, catalyzes the phosphorylation of incoming sugar substrates concomitantly with their translocation across the cell membrane. The enzyme II complex composed of PtsG and Crr is involved in glucose transport. The chain is PTS system glucose-specific EIIA component (crr) from Borreliella burgdorferi (strain ATCC 35210 / DSM 4680 / CIP 102532 / B31) (Borrelia burgdorferi).